The primary structure comprises 275 residues: 2,3,4,5-tetrahydropyridine-2,6-dicarboxylate N-succinyltransferase (275 aa).

Belongs to the transferase hexapeptide repeat family.

The protein resides in the cytoplasm. It carries out the reaction (S)-2,3,4,5-tetrahydrodipicolinate + succinyl-CoA + H2O = (S)-2-succinylamino-6-oxoheptanedioate + CoA. It participates in amino-acid biosynthesis; L-lysine biosynthesis via DAP pathway; LL-2,6-diaminopimelate from (S)-tetrahydrodipicolinate (succinylase route): step 1/3. This is 2,3,4,5-tetrahydropyridine-2,6-dicarboxylate N-succinyltransferase from Burkholderia ambifaria (strain MC40-6).